A 224-amino-acid polypeptide reads, in one-letter code: Cytidylate kinase (224 aa).

G10 to T18 is an ATP binding site.

This sequence belongs to the cytidylate kinase family. Type 1 subfamily.

Its subcellular location is the cytoplasm. The catalysed reaction is CMP + ATP = CDP + ADP. It carries out the reaction dCMP + ATP = dCDP + ADP. This is Cytidylate kinase from Haemophilus ducreyi (strain 35000HP / ATCC 700724).